A 205-amino-acid chain; its full sequence is Ras-related protein RABD1 (205 aa).

Position 2 is an N-acetylserine (serine 2). GTP is bound by residues 15-23 (GDSSVGKSC), 33-40 (YIDSYIST), 63-67 (DTAGQ), 121-124 (NKND), and 151-153 (SAK). Positions 37–45 (YISTIGVDF) match the Effector region motif. Composition is skewed to polar residues over residues 174 to 186 (GSQT…SGPG) and 194 to 205 (PIQQNNGGCCGQ). The interval 174–205 (GSQTNANKTSGPGTVQMKGQPIQQNNGGCCGQ) is disordered. Residues cysteine 202 and cysteine 203 are each lipidated (S-geranylgeranyl cysteine).

The protein belongs to the small GTPase superfamily. Rab family. In terms of assembly, does not interact with GC5. Interacts with XI-2/MYA2.

The protein localises to the golgi apparatus. It localises to the trans-Golgi network membrane. The protein resides in the golgi apparatus membrane. Protein transport. Regulator of membrane traffic from the Golgi apparatus towards the endoplasmic reticulum (ER). The chain is Ras-related protein RABD1 (RABD1) from Arabidopsis thaliana (Mouse-ear cress).